Consider the following 46-residue polypeptide: Protein YmiA (46 aa).

The helical transmembrane segment at A22–W42 threads the bilayer.

The protein localises to the cell inner membrane. This chain is Protein YmiA (ymiA), found in Escherichia coli (strain K12).